We begin with the raw amino-acid sequence, 152 residues long: Photosystem II extrinsic protein U, chloroplastic (152 aa).

Residues Met1–Ser35 constitute a chloroplast transit peptide. The transit peptide at Arg36 to Ala59 directs the protein to the thylakoid.

Belongs to the PsbU family. As to quaternary structure, PSII is composed of 1 copy each of membrane proteins PsbA, PsbB, PsbC, PsbD, PsbE, PsbF, PsbH, PsbI, PsbJ, PsbK, PsbL, PsbM, PsbT, PsbX, PsbY, PsbZ, Psb30/Ycf12, at least 3 peripheral proteins of the oxygen-evolving complex and a large number of cofactors. It forms dimeric complexes. The oxygen-evolving complex in red algae is composed of PsbO (OEC33), PsbQ', cytochrome c-550 and PsbU. Post-translationally, predicted to be translocated into the thylakoid lumen by the Tat system.

It is found in the plastid. It localises to the chloroplast thylakoid membrane. Functionally, one of the extrinsic, lumenal subunits of photosystem II (PSII). PSII is a light-driven water plastoquinone oxidoreductase, using light energy to abstract electrons from H(2)O, generating a proton gradient subsequently used for ATP formation. The extrinsic proteins stabilize the structure of photosystem II oxygen-evolving complex (OEC), the ion environment of oxygen evolution and protect the OEC against heat-induced inactivation. This chain is Photosystem II extrinsic protein U, chloroplastic, found in Pyropia yezoensis (Susabi-nori).